The primary structure comprises 215 residues: Probable maleylacetoacetate isomerase (215 aa).

Residues 2 to 85 form the GST N-terminal domain; sequence MSLILYGYWR…YLDETYPAPR (84 aa). The GST C-terminal domain maps to 90-215; it reads RGAERYQVKA…AAPENQPDAC (126 aa).

It belongs to the GST superfamily. Zeta family.

The enzyme catalyses 4-maleylacetoacetate = 4-fumarylacetoacetate. The protein operates within amino-acid degradation; L-phenylalanine degradation; acetoacetate and fumarate from L-phenylalanine: step 5/6. The chain is Probable maleylacetoacetate isomerase (maiA) from Vibrio cholerae serotype O1 (strain ATCC 39315 / El Tor Inaba N16961).